Here is a 349-residue protein sequence, read N- to C-terminus: DENN domain-containing protein 10 (349 aa).

In terms of domain architecture, uDENN spans 1–135 (MATPELMLSL…TKGICQSDEN (135 aa)). In terms of domain architecture, cDENN spans 160–294 (QFGMETIILY…ADRSDAQVIK (135 aa)). Residues 296–349 (ISVKTKEILSNLMSLADHADNSKLTLECLKQGHYPPATENFLFHLAAAEQLLKI) form the dDENN domain.

The protein belongs to the DENND10 family.

Its subcellular location is the late endosome. Its function is as follows. Guanine nucleotide exchange factor (GEF) which may be involved in the regulation of late endocytic pathway homeostasis, including endosomal positioning, maturation and secretion. The protein is DENN domain-containing protein 10 (dennd10) of Danio rerio (Zebrafish).